The following is a 117-amino-acid chain: UPF0102 protein Swoo_0351 (117 aa).

It belongs to the UPF0102 family.

In Shewanella woodyi (strain ATCC 51908 / MS32), this protein is UPF0102 protein Swoo_0351.